The following is a 229-amino-acid chain: MCDKSKENLRQIKSYVQRAGRVTKKQQQALDNYAAKYLIEYAKDRKLDFTEIFANTNDVVLEIGFGMGGSLVEMALANPAKNYLGIEVHKAGVGNILYEIEHQNIANLLVMSHDAVEILENMIADQSLASIQVYFPDPWHKKKHNKRRLVNQTNIDLFAKKLKVGGVFHYASDWLPYAEEVLELLENDSKYRNLYSGFAPRPEWRPLTKFEKRGQNLDHPISDILFEKI.

S-adenosyl-L-methionine contacts are provided by E62, E87, D114, and D137. D137 is an active-site residue. K141 is a binding site for substrate. The interval 143 to 148 (KHNKRR) is interaction with RNA. Residues D173 and 208–211 (TKFE) each bind substrate.

Belongs to the class I-like SAM-binding methyltransferase superfamily. TrmB family.

The catalysed reaction is guanosine(46) in tRNA + S-adenosyl-L-methionine = N(7)-methylguanosine(46) in tRNA + S-adenosyl-L-homocysteine. Its pathway is tRNA modification; N(7)-methylguanine-tRNA biosynthesis. Catalyzes the formation of N(7)-methylguanine at position 46 (m7G46) in tRNA. The protein is tRNA (guanine-N(7)-)-methyltransferase of Francisella tularensis subsp. novicida (strain U112).